A 453-amino-acid chain; its full sequence is Bifunctional protein GlmU (453 aa).

The tract at residues 1–228 (MPHWAAVIMA…VHEALGINSR (228 aa)) is pyrophosphorylase. UDP-N-acetyl-alpha-D-glucosamine is bound by residues lysine 23, glutamine 73, 78–79 (GT), 100–102 (SGD), glycine 139, glutamate 153, asparagine 168, and asparagine 226. A Mg(2+)-binding site is contributed by aspartate 102. A Mg(2+)-binding site is contributed by asparagine 226. A linker region spans residues 229-249 (AQLAAAEDVARQRILSYWMEE). The segment at 250-453 (GVTIIDPRST…IENWVRNKKK (204 aa)) is N-acetyltransferase. UDP-N-acetyl-alpha-D-glucosamine is bound by residues arginine 331 and lysine 349. Residue histidine 361 is the Proton acceptor of the active site. UDP-N-acetyl-alpha-D-glucosamine contacts are provided by tyrosine 364 and asparagine 375. Acetyl-CoA contacts are provided by residues alanine 378, 384–385 (NY), serine 403, alanine 421, and arginine 438.

It in the N-terminal section; belongs to the N-acetylglucosamine-1-phosphate uridyltransferase family. The protein in the C-terminal section; belongs to the transferase hexapeptide repeat family. Homotrimer. Mg(2+) serves as cofactor.

The protein localises to the cytoplasm. The enzyme catalyses alpha-D-glucosamine 1-phosphate + acetyl-CoA = N-acetyl-alpha-D-glucosamine 1-phosphate + CoA + H(+). The catalysed reaction is N-acetyl-alpha-D-glucosamine 1-phosphate + UTP + H(+) = UDP-N-acetyl-alpha-D-glucosamine + diphosphate. Its pathway is nucleotide-sugar biosynthesis; UDP-N-acetyl-alpha-D-glucosamine biosynthesis; N-acetyl-alpha-D-glucosamine 1-phosphate from alpha-D-glucosamine 6-phosphate (route II): step 2/2. It participates in nucleotide-sugar biosynthesis; UDP-N-acetyl-alpha-D-glucosamine biosynthesis; UDP-N-acetyl-alpha-D-glucosamine from N-acetyl-alpha-D-glucosamine 1-phosphate: step 1/1. It functions in the pathway bacterial outer membrane biogenesis; LPS lipid A biosynthesis. In terms of biological role, catalyzes the last two sequential reactions in the de novo biosynthetic pathway for UDP-N-acetylglucosamine (UDP-GlcNAc). The C-terminal domain catalyzes the transfer of acetyl group from acetyl coenzyme A to glucosamine-1-phosphate (GlcN-1-P) to produce N-acetylglucosamine-1-phosphate (GlcNAc-1-P), which is converted into UDP-GlcNAc by the transfer of uridine 5-monophosphate (from uridine 5-triphosphate), a reaction catalyzed by the N-terminal domain. In Desulfitobacterium hafniense (strain DSM 10664 / DCB-2), this protein is Bifunctional protein GlmU.